Consider the following 217-residue polypeptide: 3-isopropylmalate dehydratase small subunit (217 aa).

It belongs to the LeuD family. LeuD type 1 subfamily. Heterodimer of LeuC and LeuD.

The catalysed reaction is (2R,3S)-3-isopropylmalate = (2S)-2-isopropylmalate. The protein operates within amino-acid biosynthesis; L-leucine biosynthesis; L-leucine from 3-methyl-2-oxobutanoate: step 2/4. Catalyzes the isomerization between 2-isopropylmalate and 3-isopropylmalate, via the formation of 2-isopropylmaleate. This Paraburkholderia phymatum (strain DSM 17167 / CIP 108236 / LMG 21445 / STM815) (Burkholderia phymatum) protein is 3-isopropylmalate dehydratase small subunit.